The chain runs to 192 residues: Elongation factor P (192 aa).

It belongs to the elongation factor P family.

Its subcellular location is the cytoplasm. It participates in protein biosynthesis; polypeptide chain elongation. Functionally, involved in peptide bond synthesis. Stimulates efficient translation and peptide-bond synthesis on native or reconstituted 70S ribosomes in vitro. Probably functions indirectly by altering the affinity of the ribosome for aminoacyl-tRNA, thus increasing their reactivity as acceptors for peptidyl transferase. The sequence is that of Elongation factor P (efp) from Aquifex aeolicus (strain VF5).